The primary structure comprises 348 residues: GTPase Obg (348 aa).

The Obg domain maps to 1–159; the sequence is MKFLDLAKVY…RTIWLRLKLI (159 aa). The region spanning 160–327 is the OBG-type G domain; the sequence is ADAGLLGLPN…VLRAVRAEID (168 aa). GTP-binding positions include 166 to 173, 191 to 195, 212 to 215, 279 to 282, and 308 to 310; these read GLPNAGKS, FTTLH, DIPG, NKID, and SSV. 2 residues coordinate Mg(2+): serine 173 and threonine 193.

Belongs to the TRAFAC class OBG-HflX-like GTPase superfamily. OBG GTPase family. Monomer. Requires Mg(2+) as cofactor.

The protein resides in the cytoplasm. Its function is as follows. An essential GTPase which binds GTP, GDP and possibly (p)ppGpp with moderate affinity, with high nucleotide exchange rates and a fairly low GTP hydrolysis rate. Plays a role in control of the cell cycle, stress response, ribosome biogenesis and in those bacteria that undergo differentiation, in morphogenesis control. In Ruegeria sp. (strain TM1040) (Silicibacter sp.), this protein is GTPase Obg.